The following is a 92-amino-acid chain: Large ribosomal subunit protein eL43A (92 aa).

The C4-type zinc-finger motif lies at 39–60 (CSFCGKKTVKRGAAGIWTCSCC). S40 bears the Phosphoserine mark.

This sequence belongs to the eukaryotic ribosomal protein eL43 family. In terms of assembly, component of the large ribosomal subunit (LSU). Mature yeast ribosomes consist of a small (40S) and a large (60S) subunit. The 40S small subunit contains 1 molecule of ribosomal RNA (18S rRNA) and 33 different proteins (encoded by 57 genes). The large 60S subunit contains 3 rRNA molecules (25S, 5.8S and 5S rRNA) and 46 different proteins (encoded by 81 genes).

The protein resides in the cytoplasm. Its function is as follows. Component of the ribosome, a large ribonucleoprotein complex responsible for the synthesis of proteins in the cell. The small ribosomal subunit (SSU) binds messenger RNAs (mRNAs) and translates the encoded message by selecting cognate aminoacyl-transfer RNA (tRNA) molecules. The large subunit (LSU) contains the ribosomal catalytic site termed the peptidyl transferase center (PTC), which catalyzes the formation of peptide bonds, thereby polymerizing the amino acids delivered by tRNAs into a polypeptide chain. The nascent polypeptides leave the ribosome through a tunnel in the LSU and interact with protein factors that function in enzymatic processing, targeting, and the membrane insertion of nascent chains at the exit of the ribosomal tunnel. The polypeptide is Large ribosomal subunit protein eL43A (Saccharomyces cerevisiae (strain ATCC 204508 / S288c) (Baker's yeast)).